The chain runs to 126 residues: Aspartate 1-decarboxylase (126 aa).

The active-site Schiff-base intermediate with substrate; via pyruvic acid is S25. S25 is modified (pyruvic acid (Ser)). A substrate-binding site is contributed by T57. Y58 acts as the Proton donor in catalysis. 73–75 is a substrate binding site; it reads GGA.

The protein belongs to the PanD family. Heterooctamer of four alpha and four beta subunits. Requires pyruvate as cofactor. In terms of processing, is synthesized initially as an inactive proenzyme, which is activated by self-cleavage at a specific serine bond to produce a beta-subunit with a hydroxyl group at its C-terminus and an alpha-subunit with a pyruvoyl group at its N-terminus.

Its subcellular location is the cytoplasm. It carries out the reaction L-aspartate + H(+) = beta-alanine + CO2. It participates in cofactor biosynthesis; (R)-pantothenate biosynthesis; beta-alanine from L-aspartate: step 1/1. Its function is as follows. Catalyzes the pyruvoyl-dependent decarboxylation of aspartate to produce beta-alanine. In Xylella fastidiosa (strain M12), this protein is Aspartate 1-decarboxylase.